The chain runs to 152 residues: ESAT-6 secretion machinery protein EssA (152 aa).

The Cytoplasmic segment spans residues 1–114; the sequence is MLMNSVIALT…PYIQNKQEKK (114 aa). The helical transmembrane segment at 115–135 threads the bilayer; it reads IFPYILMSVGAFLTLGFVIFS. Residues 136 to 152 are Extracellular-facing; sequence IHKGRRTKNESARKSNI.

The protein belongs to the EssA family.

The protein localises to the cell membrane. In terms of biological role, component of the ESAT-6 secretion system (Ess). Required for the secretion of EsxA. This is ESAT-6 secretion machinery protein EssA from Staphylococcus aureus (strain MRSA252).